Reading from the N-terminus, the 447-residue chain is Ribosomal protein uS12 methylthiotransferase RimO (447 aa).

One can recognise an MTTase N-terminal domain in the interval 15-125; that stretch reads PRVGFVSLGC…VMQAIHRHLP (111 aa). The [4Fe-4S] cluster site is built by C24, C60, C89, C156, C160, and C163. The Radical SAM core domain occupies 142–379; it reads LTPKHYAYLK…MQWQEEISKK (238 aa). In terms of domain architecture, TRAM spans 379–447; it reads KRLAGKKGRI…GIHDLWAKKI (69 aa).

Belongs to the methylthiotransferase family. RimO subfamily. [4Fe-4S] cluster is required as a cofactor.

It localises to the cytoplasm. It catalyses the reaction L-aspartate(89)-[ribosomal protein uS12]-hydrogen + (sulfur carrier)-SH + AH2 + 2 S-adenosyl-L-methionine = 3-methylsulfanyl-L-aspartate(89)-[ribosomal protein uS12]-hydrogen + (sulfur carrier)-H + 5'-deoxyadenosine + L-methionine + A + S-adenosyl-L-homocysteine + 2 H(+). In terms of biological role, catalyzes the methylthiolation of an aspartic acid residue of ribosomal protein uS12. This is Ribosomal protein uS12 methylthiotransferase RimO from Nitrosomonas europaea (strain ATCC 19718 / CIP 103999 / KCTC 2705 / NBRC 14298).